Reading from the N-terminus, the 244-residue chain is Thiol S-methyltransferase TMT1A (244 aa).

Residues 1-28 form a targeting to lipid droplets region; the sequence is MELTIFILRLAIYILTFPLYLLNFLGLW. Residues 1–29 form the signal peptide; sequence MELTIFILRLAIYILTFPLYLLNFLGLWS.

The protein belongs to the methyltransferase superfamily. In terms of assembly, (Microbial infection) Interacts with HCV non-structural protein 4B/NS4B (via C-terminal region); this interaction may promote the recruitment of NS4B in the proximity of lipid droplet. Self-associates. Interacts with SNRNP200; this interaction may promote the odontogenic differentiation. In terms of processing, methylated at lysine residues most likely by EZH2. In terms of tissue distribution, expressed in the liver.

Its subcellular location is the lipid droplet. The protein localises to the endoplasmic reticulum. It localises to the membrane. The protein resides in the microsome. It is found in the cytoplasm. Its subcellular location is the cytosol. The enzyme catalyses a thiol + S-adenosyl-L-methionine = a methyl thioether + S-adenosyl-L-homocysteine + H(+). It carries out the reaction an adenosine in mRNA + S-adenosyl-L-methionine = an N(6)-methyladenosine in mRNA + S-adenosyl-L-homocysteine + H(+). Its activity is regulated as follows. Inhibited by 2,3-dichloro-alpha-methylbenzylamine (DCMB). In terms of biological role, thiol S-methyltransferase that catalyzes the transfer of a methyl group from S-adenosyl-L-methionine to alkyl and phenolic thiol-containing acceptor substrates. Together with TMT1B accounts for most of S-thiol methylation activity in the endoplasmic reticulum of hepatocytes. Able to methylate the N6 position of adenosine residues in long non-coding RNAs (lncRNAs). May facilitate lncRNAs transfer into exosomes at the tumor-stroma interface. Promotes osteogenic and odontogenic differentiation by regulating the expression of genes involved in stem cell differentiation and survival. Targeted from the endoplasmic reticulum to lipid droplets, where it recruits cellular proteins to form functional organelles. (Microbial infection) May be involved in the assembly and release stages of hepatitis C virus (HCV) life cycle and thus play a crucial role in HCV propagation. In Homo sapiens (Human), this protein is Thiol S-methyltransferase TMT1A.